Consider the following 212-residue polypeptide: Methylthioribulose-1-phosphate dehydratase (212 aa).

The Zn(2+) site is built by His98 and His100.

It belongs to the aldolase class II family. MtnB subfamily. Zn(2+) serves as cofactor.

It carries out the reaction 5-(methylsulfanyl)-D-ribulose 1-phosphate = 5-methylsulfanyl-2,3-dioxopentyl phosphate + H2O. Its pathway is amino-acid biosynthesis; L-methionine biosynthesis via salvage pathway; L-methionine from S-methyl-5-thio-alpha-D-ribose 1-phosphate: step 2/6. Its function is as follows. Catalyzes the dehydration of methylthioribulose-1-phosphate (MTRu-1-P) into 2,3-diketo-5-methylthiopentyl-1-phosphate (DK-MTP-1-P). This chain is Methylthioribulose-1-phosphate dehydratase, found in Picosynechococcus sp. (strain ATCC 27264 / PCC 7002 / PR-6) (Agmenellum quadruplicatum).